A 266-amino-acid polypeptide reads, in one-letter code: MPDWVLAIILGVVEGLTEFIPVSSTGHILLLGHFLGFHSTGKVFEVMIQLGAILAVISVYFGRLWSVATHLHTDPAARRFVASIVLAFLPAGFAGFLLHDYIKAVLFETPAVICVSLILGGFALLAVDRIQREPVYTDAGAFPLKTAFIIGLFQCLALIPGVSRSGATVAGALLMRCDKRSAAEFSFFLAMPTMAGAFTVDLAKNYKLLSADDAGIIALGFVCALVAAIITVRKVVDFVGRHGFAPFAWWRIAVGALGLLGLAFIG.

8 helical membrane-spanning segments follow: residues 4–24 (WVLA…PVSS), 41–61 (GKVF…SVYF), 80–100 (FVAS…LLHD), 105–125 (VLFE…FALL), 139–159 (AGAF…LALI), 182–202 (AAEF…TVDL), 212–232 (DDAG…IITV), and 245–265 (APFA…LAFI).

This sequence belongs to the UppP family.

Its subcellular location is the cell inner membrane. It catalyses the reaction di-trans,octa-cis-undecaprenyl diphosphate + H2O = di-trans,octa-cis-undecaprenyl phosphate + phosphate + H(+). In terms of biological role, catalyzes the dephosphorylation of undecaprenyl diphosphate (UPP). Confers resistance to bacitracin. This chain is Undecaprenyl-diphosphatase, found in Phenylobacterium zucineum (strain HLK1).